Reading from the N-terminus, the 331-residue chain is Anthranilate phosphoribosyltransferase (331 aa).

Residues glycine 81, 84-85 (GD), serine 89, 91-94 (NCST), 109-117 (KHGNRAVSS), and serine 121 each bind 5-phospho-alpha-D-ribose 1-diphosphate. An anthranilate-binding site is contributed by glycine 81. Serine 93 lines the Mg(2+) pocket. Asparagine 112 is a binding site for anthranilate. Arginine 167 lines the anthranilate pocket. Mg(2+) contacts are provided by aspartate 226 and glutamate 227.

It belongs to the anthranilate phosphoribosyltransferase family. In terms of assembly, homodimer. Mg(2+) is required as a cofactor.

The enzyme catalyses N-(5-phospho-beta-D-ribosyl)anthranilate + diphosphate = 5-phospho-alpha-D-ribose 1-diphosphate + anthranilate. The protein operates within amino-acid biosynthesis; L-tryptophan biosynthesis; L-tryptophan from chorismate: step 2/5. Its function is as follows. Catalyzes the transfer of the phosphoribosyl group of 5-phosphorylribose-1-pyrophosphate (PRPP) to anthranilate to yield N-(5'-phosphoribosyl)-anthranilate (PRA). The polypeptide is Anthranilate phosphoribosyltransferase (Oleidesulfovibrio alaskensis (strain ATCC BAA-1058 / DSM 17464 / G20) (Desulfovibrio alaskensis)).